The sequence spans 33 residues: Brevinin-2 (33 aa).

A disulfide bond links Cys-27 and Cys-33.

It belongs to the frog skin active peptide (FSAP) family. Brevinin subfamily. As to expression, expressed by the skin glands.

The protein localises to the secreted. Functionally, shows antibacterial activity against representative Gram-negative and Gram-positive bacterial species, and a very high hemolytic activity. This chain is Brevinin-2, found in Pelophylax porosus brevipodus (Nagoya Daruma pond frog).